The sequence spans 485 residues: Cytoplasmic tRNA 2-thiolation protein 2 (485 aa).

It belongs to the CTU2/NCS2 family.

The protein resides in the cytoplasm. The protein operates within tRNA modification; 5-methoxycarbonylmethyl-2-thiouridine-tRNA biosynthesis. Plays a central role in 2-thiolation of mcm(5)S(2)U at tRNA wobble positions of tRNA(Lys), tRNA(Glu) and tRNA(Gln). May act by forming a heterodimer with NCS6 that ligates sulfur from thiocarboxylated URM1 onto the uridine of tRNAs at wobble position. Prior mcm(5) tRNA modification by the elongator complex is required for 2-thiolation. May also be involved in protein urmylation. The sequence is that of Cytoplasmic tRNA 2-thiolation protein 2 from Vanderwaltozyma polyspora (strain ATCC 22028 / DSM 70294 / BCRC 21397 / CBS 2163 / NBRC 10782 / NRRL Y-8283 / UCD 57-17) (Kluyveromyces polysporus).